Consider the following 289-residue polypeptide: Oxaloacetate decarboxylase (289 aa).

S50 is a binding site for substrate. D88 serves as a coordination point for Mg(2+). Positions 159 and 235 each coordinate substrate.

Belongs to the isocitrate lyase/PEP mutase superfamily. Oxaloacetate decarboxylase family. As to quaternary structure, homotetramer; dimer of dimers. Requires Mg(2+) as cofactor.

The enzyme catalyses oxaloacetate + H(+) = pyruvate + CO2. Catalyzes the decarboxylation of oxaloacetate into pyruvate. Seems to play a role in maintaining cellular concentrations of bicarbonate and pyruvate. The chain is Oxaloacetate decarboxylase from Pseudomonas entomophila (strain L48).